The primary structure comprises 217 residues: Salivary glue protein Sgs-3 (217 aa).

The first 23 residues, 1-23, serve as a signal peptide directing secretion; it reads MKLTIATVLASILLIGFANVANC. Residues 45–130 are compositionally biased toward low complexity; it reads KSTSTTTTTT…KPTTHSTPKT (86 aa). Residues 45-163 form a disordered region; it reads KSTSTTTTTT…KHTTPTTTTT (119 aa). Residues 131 to 154 show a composition bias toward basic residues; the sequence is KPTKHTTPKTKPTKHTTPKTKPTK.

The polypeptide is Salivary glue protein Sgs-3 (Sgs3) (Drosophila simulans (Fruit fly)).